The following is a 1492-amino-acid chain: Cystic fibrosis transmembrane conductance regulator (1492 aa).

The Cytoplasmic segment spans residues 1–78 (MQRSPIEKAN…KLVNALRRCF (78 aa)). The helical transmembrane segment at 79 to 99 (FWRFLFYGILLYFVEFTKAVQ) threads the bilayer. An ABC transmembrane type-1 1 domain is found at 82–366 (FLFYGILLYF…SAIQTWYDSL (285 aa)). Residues 100 to 123 (PLCLGRIIASYNAKNTYEREIAYY) are Extracellular-facing. A helical transmembrane segment spans residues 124-147 (LALGLCLLFVVRTLFLHPAVFGLQ). Residues 148–196 (HLGMQMRIALFSLIYKKILKMSSRVLDKIDTGQLVSLLSNNLNKFDEGV) are Cytoplasmic-facing. The chain crosses the membrane as a helical span at residues 197–217 (AVAHFVWIAPVQVVLLMGLIW). Topologically, residues 218-223 (NELTEF) are extracellular. A helical membrane pass occupies residues 224-244 (VFCGLGFLIMLALFQAWLGKK). The Cytoplasmic segment spans residues 245-299 (MMQYRDKRAGKINERLAITSEIIDNIQSVKVYCWEDAMEKIIDDIRQVELKLTRK). The chain crosses the membrane as a helical span at residues 300 to 320 (VAYCRYFSSSAFFFSGFFVVF). Residues 321–340 (LSVVPYAFIHTIKLRRIFTT) are Extracellular-facing. A helical transmembrane segment spans residues 341-359 (ISYNIVLRMTVTRQFPSAI). Over 360–867 (QTWYDSLGAI…YLRYVTTNRN (508 aa)) the chain is Cytoplasmic. ATP-binding positions include Trp402, Ser435, 459-466 (GSTGSGKS), and Gln494. One can recognise an ABC transporter 1 domain in the interval 424–647 (NGDDGLFFSN…KPDFSSQLLG (224 aa)). The disordered R region stretch occupies residues 655 to 840 (SAERRNSILT…EEINEEDLKE (186 aa)). A helical transmembrane segment spans residues 868 to 888 (LVFVLILCLVIFLAEVAASLA). The 302-residue stretch at 868-1169 (LVFVLILCLV…AVNSSIDVDG (302 aa)) folds into the ABC transmembrane type-1 2 domain. Residues 889-932 (GLWIISGLAINTGSQTNDTSTDLSHLSVFSKFITNGSHYYIFYI) lie on the Extracellular side of the membrane. 2 N-linked (GlcNAc...) asparagine glycosylation sites follow: Asn905 and Asn923. Residues 933 to 953 (YVGLADSFLALGVIRGLPLVH) form a discontinuously helical membrane-spanning segment. The Cytoplasmic segment spans residues 954-1004 (TLVTVSKDLHKQMLHSVLQGPMTAFNKMKAGRILNRFIKDTAIIDDMLPLT). The chain crosses the membrane as a helical span at residues 1005–1025 (VFDFVQLILIVVGAICVVSVL). The Extracellular segment spans residues 1026–1027 (QP). The chain crosses the membrane as a helical span at residues 1028–1048 (YTLLAAIPVAVIFIMLRAYFL). The Cytoplasmic segment spans residues 1049–1109 (RTSQQLKQLE…TANWFLYLST (61 aa)). The helical transmembrane segment at 1110-1130 (LRWFQMRIDIVFVLFFIAVTF) threads the bilayer. The Extracellular portion of the chain corresponds to 1131 to 1144 (IAIATHDVGEGQVG). A helical membrane pass occupies residues 1145 to 1165 (IILTLAMNITSTLQWAVNSSI). Residues 1166–1492 (DVDGLMRSVS…AEEDLQETRL (327 aa)) are Cytoplasmic-facing. Positions 1220–1453 (MMVNNLTAKY…ASLFKQVFGH (234 aa)) constitute an ABC transporter 2 domain. ATP is bound by residues Tyr1229 and 1254–1261 (GRTGAGKS). The segment covering 1465–1474 (RNSSKRKTRP) has biased composition (basic residues). The tract at residues 1465-1492 (RNSSKRKTRPKISALQEEAEEDLQETRL) is disordered. A compositionally biased stretch (acidic residues) spans 1481–1492 (EEAEEDLQETRL). Residues 1483 to 1485 (AEE) carry the PDZ-binding motif.

This sequence belongs to the ABC transporter superfamily. ABCC family. CFTR transporter (TC 3.A.1.202) subfamily. In terms of assembly, monomer; does not require oligomerization for channel activity. May form oligomers in the membrane. Post-translationally, phosphorylated; cAMP treatment promotes phosphorylation and activates the channel. Dephosphorylation decreases the ATPase activity (in vitro). Phosphorylation at PKA sites activates the channel. Phosphorylation at PKC sites enhances the response to phosphorylation by PKA. As to expression, expressed in the rectal gland (at protein level).

The protein resides in the apical cell membrane. It localises to the early endosome membrane. Its subcellular location is the cell membrane. The protein localises to the recycling endosome membrane. It is found in the endoplasmic reticulum membrane. It catalyses the reaction ATP + H2O + closed Cl(-) channel = ADP + phosphate + open Cl(-) channel.. The catalysed reaction is chloride(in) = chloride(out). It carries out the reaction hydrogencarbonate(in) = hydrogencarbonate(out). The enzyme catalyses ATP + H2O = ADP + phosphate + H(+). Epithelial ion channel that plays an important role in the regulation of epithelial ion and water transport and fluid homeostasis. Mediates the transport of chloride ions across the cell membrane. Possesses an intrinsic ATPase activity and utilizes ATP to gate its channel; the passive flow of anions through the channel is gated by cycles of ATP binding and hydrolysis by the ATP-binding domains. The ion channel is also permeable to HCO(3)(-); selectivity depends on the extracellular chloride concentration. Exerts its function also by modulating the activity of other ion channels and transporters. Contributes to the regulation of the pH and the ion content of the epithelial fluid layer. The protein is Cystic fibrosis transmembrane conductance regulator of Squalus acanthias (Spiny dogfish).